The primary structure comprises 254 residues: Triosephosphate isomerase, cytosolic (254 aa).

Residues N10 and K12 each coordinate substrate. The active-site Electrophile is the H96. E166 acts as the Proton acceptor in catalysis.

The protein belongs to the triosephosphate isomerase family. Homodimer.

The protein resides in the cytoplasm. It catalyses the reaction D-glyceraldehyde 3-phosphate = dihydroxyacetone phosphate. Its pathway is carbohydrate biosynthesis; gluconeogenesis. It functions in the pathway carbohydrate degradation; glycolysis; D-glyceraldehyde 3-phosphate from glycerone phosphate: step 1/1. The sequence is that of Triosephosphate isomerase, cytosolic (TPIP1) from Petunia hybrida (Petunia).